The primary structure comprises 429 residues: Adenylosuccinate synthetase (429 aa).

GTP-binding positions include 12–18 (GDEGKGK) and 40–42 (GHT). The Proton acceptor role is filled by Asp-13. Asp-13 and Gly-40 together coordinate Mg(2+). IMP is bound by residues 13–16 (DEGK), 38–41 (NAGH), Thr-128, Arg-142, Gln-223, Thr-238, and Arg-302. Catalysis depends on His-41, which acts as the Proton donor. 298 to 304 (TVTGRPR) contacts substrate. Residues Arg-304, 330–332 (LLD), and 412–414 (SVG) contribute to the GTP site.

This sequence belongs to the adenylosuccinate synthetase family. Homodimer. The cofactor is Mg(2+).

The protein localises to the cytoplasm. It catalyses the reaction IMP + L-aspartate + GTP = N(6)-(1,2-dicarboxyethyl)-AMP + GDP + phosphate + 2 H(+). It participates in purine metabolism; AMP biosynthesis via de novo pathway; AMP from IMP: step 1/2. Plays an important role in the de novo pathway of purine nucleotide biosynthesis. Catalyzes the first committed step in the biosynthesis of AMP from IMP. The protein is Adenylosuccinate synthetase of Limosilactobacillus fermentum (strain NBRC 3956 / LMG 18251) (Lactobacillus fermentum).